Reading from the N-terminus, the 603-residue chain is Elongation factor 4 (603 aa).

The tr-type G domain maps to 7 to 191; that stretch reads DNIRNFSIVA…AIVTRLPPPK (185 aa). GTP is bound by residues 19–24 and 138–141; these read DHGKST and NKVD.

This sequence belongs to the TRAFAC class translation factor GTPase superfamily. Classic translation factor GTPase family. LepA subfamily.

It is found in the cell inner membrane. The enzyme catalyses GTP + H2O = GDP + phosphate + H(+). Required for accurate and efficient protein synthesis under certain stress conditions. May act as a fidelity factor of the translation reaction, by catalyzing a one-codon backward translocation of tRNAs on improperly translocated ribosomes. Back-translocation proceeds from a post-translocation (POST) complex to a pre-translocation (PRE) complex, thus giving elongation factor G a second chance to translocate the tRNAs correctly. Binds to ribosomes in a GTP-dependent manner. The protein is Elongation factor 4 of Rhodopseudomonas palustris (strain BisA53).